The chain runs to 316 residues: PDZ and LIM domain protein 3 (316 aa).

In terms of domain architecture, PDZ spans 1–84 (MPQNVVLPGP…QLCLKIDRAE (84 aa)). Phosphoserine occurs at positions 18 and 93. An Omega-N-methylarginine modification is found at Arg164. The region spanning 244–303 (PLCDKCGSGIVGAVVKARDKYRHPECFVCADCNLNLKQKGYFFVEGELYCETHARARTRP) is the LIM zinc-binding domain.

As to quaternary structure, interacts with ACTN2. Forms a heterodimer with PDLIM4 (via LIM domain).

The protein localises to the cytoplasm. It localises to the myofibril. Its subcellular location is the sarcomere. It is found in the z line. Functionally, may play a role in the organization of actin filament arrays within muscle cells. The chain is PDZ and LIM domain protein 3 (Pdlim3) from Mus musculus (Mouse).